A 113-amino-acid chain; its full sequence is U11-theraphotoxin-Hhn1e (113 aa).

An N-terminal signal peptide occupies residues 1 to 21 (MNTVRVTFLLVFVLAVSLGQA). Residues 22–74 (DKDENRMEMLEKTEQGKSYLDFAENLLLQKLEELEARLLEEDSEESRNSRQKR) constitute a propeptide that is removed on maturation. The segment covering 60–69 (LEEDSEESRN) has biased composition (basic and acidic residues). The tract at residues 60–87 (LEEDSEESRNSRQKRCIGEGVPRDENDP) is disordered. 2 cysteine pairs are disulfide-bonded: cysteine 75/cysteine 90 and cysteine 89/cysteine 110.

This sequence belongs to the neurotoxin 14 (magi-1) family. 01 (HNTX-16) subfamily. Expressed by the venom gland.

It is found in the secreted. Functionally, probable ion channel inhibitor. The sequence is that of U11-theraphotoxin-Hhn1e from Cyriopagopus hainanus (Chinese bird spider).